Here is a 416-residue protein sequence, read N- to C-terminus: UDP-N-acetylglucosamine 1-carboxyvinyltransferase (416 aa).

A phosphoenolpyruvate-binding site is contributed by 22–23 (KN). A UDP-N-acetyl-alpha-D-glucosamine-binding site is contributed by Arg92. Cys116 functions as the Proton donor in the catalytic mechanism. A 2-(S-cysteinyl)pyruvic acid O-phosphothioketal modification is found at Cys116. UDP-N-acetyl-alpha-D-glucosamine contacts are provided by Asp304 and Ile326.

This sequence belongs to the EPSP synthase family. MurA subfamily.

The protein resides in the cytoplasm. The catalysed reaction is phosphoenolpyruvate + UDP-N-acetyl-alpha-D-glucosamine = UDP-N-acetyl-3-O-(1-carboxyvinyl)-alpha-D-glucosamine + phosphate. It functions in the pathway cell wall biogenesis; peptidoglycan biosynthesis. Functionally, cell wall formation. Adds enolpyruvyl to UDP-N-acetylglucosamine. The chain is UDP-N-acetylglucosamine 1-carboxyvinyltransferase from Solidesulfovibrio magneticus (strain ATCC 700980 / DSM 13731 / RS-1) (Desulfovibrio magneticus).